The following is a 507-amino-acid chain: Glycerol kinase (507 aa).

Threonine 15 is a binding site for ADP. 3 residues coordinate ATP: threonine 15, threonine 16, and serine 17. Threonine 15 lines the sn-glycerol 3-phosphate pocket. Arginine 19 serves as a coordination point for ADP. Sn-glycerol 3-phosphate is bound by residues arginine 85, glutamate 86, tyrosine 137, and aspartate 250. 5 residues coordinate glycerol: arginine 85, glutamate 86, tyrosine 137, aspartate 250, and glutamine 251. ADP is bound by residues threonine 272, glycine 316, and glycine 418. Residues threonine 272, glycine 316, and glycine 418 each coordinate ATP.

This sequence belongs to the FGGY kinase family.

The enzyme catalyses glycerol + ATP = sn-glycerol 3-phosphate + ADP + H(+). The protein operates within polyol metabolism; glycerol degradation via glycerol kinase pathway; sn-glycerol 3-phosphate from glycerol: step 1/1. With respect to regulation, inhibited by fructose 1,6-bisphosphate (FBP). Functionally, key enzyme in the regulation of glycerol uptake and metabolism. Catalyzes the phosphorylation of glycerol to yield sn-glycerol 3-phosphate. This Malacoplasma penetrans (strain HF-2) (Mycoplasma penetrans) protein is Glycerol kinase.